A 1838-amino-acid chain; its full sequence is Collagen alpha-1(V) chain (1838 aa).

The first 36 residues, 1–36 (MDVHTRWKAARPGALLLSSPLLLFLLLLWAPPSSRA), serve as a signal peptide directing secretion. The Laminin G-like domain occupies 72-244 (DVAYRVSKDA…DYCEHYSPDC (173 aa)). The nonhelical region stretch occupies residues 231 to 443 (RAAYDYCEHY…MPANQDTIFE (213 aa)). Tyrosine 234, tyrosine 236, tyrosine 240, tyrosine 262, and tyrosine 263 each carry sulfotyrosine. Disordered stretches follow at residues 242–545 (PDCD…QESQ) and 559–1574 (GPAG…EVIQ). The segment covering 258-268 (NPDEYYPEGEG) has biased composition (acidic residues). Composition is skewed to low complexity over residues 335–345 (DYDYVPPDDYY), 374–387 (VPTS…TSNP), 413–428 (YDPY…VSPS), and 460–469 (IIEPGMLIEG). Positions 444-558 (GIGGPRGEKG…ILQQARLALR (115 aa)) are interrupted collagenous region. The span at 470–485 (PPGPEGPAGLPGPPGT) shows a compositional bias: pro residues. Composition is skewed to low complexity over residues 506–523 (LPGA…LMLP) and 559–570 (GPAGPMGLTGRP). Residues 559-1570 (GPAGPMGLTG…GLPGPPGPPG (1012 aa)) form a triple-helical region region. 4-hydroxyproline is present on residues proline 570, proline 576, and proline 621. Lysine 627 bears the 5-hydroxylysine mark. 4-hydroxyproline is present on proline 639. Lysine 642 carries the 5-hydroxylysine modification. 5 positions are modified to 4-hydroxyproline: proline 648, proline 654, proline 657, proline 675, and proline 678. Positions 671–686 (PRGLPGEPGPRGLLGP) are enriched in low complexity. 3-hydroxyproline occurs at positions 680 and 686. Residues 687–696 (KGPPGPPGPP) are compositionally biased toward pro residues. 4-hydroxyproline is present on residues proline 690, proline 696, and proline 705. Lysine 708 carries the 5-hydroxylysine modification. 4-hydroxyproline is present on residues proline 717, proline 720, proline 726, and proline 732. The segment covering 722–741 (QQGNPGAQGLPGPQGAIGPP) has biased composition (low complexity). The residue at position 744 (lysine 744) is a 5-hydroxylysine. The span at 747–756 (LGKPGLPGMP) shows a compositional bias: low complexity. Residues proline 750, proline 756, proline 762, proline 765, and proline 771 each carry the 4-hydroxyproline modification. Lysine 774 carries the 5-hydroxylysine modification. 2 positions are modified to 4-hydroxyproline: proline 780 and proline 789. Residues lysine 795, lysine 804, lysine 807, and lysine 810 each carry the 5-hydroxylysine modification. A 4-hydroxyproline modification is found at proline 816. A 5-hydroxylysine modification is found at lysine 819. Proline 834 carries the 4-hydroxyproline modification. The segment covering 837–846 (RGEDGPEGPK) has biased composition (basic and acidic residues). 5-hydroxylysine is present on residues lysine 846 and lysine 864. A 4-hydroxyproline mark is found at proline 870, proline 873, and proline 876. Lysine 882 carries the 5-hydroxylysine modification. 2 positions are modified to 4-hydroxyproline: proline 888 and proline 891. Residue lysine 897 is modified to 5-hydroxylysine. 4-hydroxyproline occurs at positions 903 and 906. Residues 908–917 (PRGQRGPTGP) show a composition bias toward low complexity. 4-hydroxyproline occurs at positions 930 and 945. Low complexity-rich tracts occupy residues 971 to 990 (KDGL…QGKT) and 999 to 1011 (VGPQ…TGPM). 4-hydroxyproline occurs at positions 1017, 1020, 1023, and 1029. The segment covering 1088 to 1104 (SPGERGPAGAAGPIGIP) has biased composition (low complexity). Residues 1106-1115 (RPGPQGPPGP) show a composition bias toward pro residues. Proline 1221 and proline 1224 each carry 4-hydroxyproline. Positions 1259 to 1268 (PSGAPGADGP) are enriched in low complexity. The segment covering 1294-1303 (GLPGEGGPLG) has biased composition (gly residues). Pro residues-rich tracts occupy residues 1380-1398 (TGEP…PGPA) and 1454-1469 (SPGP…PPGL). Proline 1467 and proline 1470 each carry 4-hydroxyproline. Low complexity predominate over residues 1485-1494 (PGLIGLIGPP). The segment covering 1526-1541 (PLGPPGPPGLPGPPGP) has biased composition (pro residues). A compositionally biased stretch (low complexity) spans 1542–1554 (KGAKGSSGPTGPK). The segment at 1571–1605 (EVIQPLPIQASRTRRNIDASQLLDDGAGESYVDYA) is nonhelical region. A sulfotyrosine mark is found at tyrosine 1601 and tyrosine 1604. Residues 1609–1837 (EEIFGSLNSL…GFEVGPACFL (229 aa)) form the Fibrillar collagen NC1 domain.

It belongs to the fibrillar collagen family. In terms of assembly, trimers of two alpha 1(V) and one alpha 2(V) chains in most tissues and trimers of one alpha 1(V), one alpha 2(V), and one alpha 3(V) chains in placenta. Interacts with CSPG4. Post-translationally, hydroxylation on proline residues within the sequence motif, GXPG, is most likely to be 4-hydroxy as this fits the requirement for 4-hydroxylation in vertebrates. Sulfated on 40% of tyrosines. Widely expressed. Isoform 2 is more highly expressed in liver, kidney and lung.

The protein resides in the secreted. It localises to the extracellular space. Its subcellular location is the extracellular matrix. Functionally, type V collagen is a member of group I collagen (fibrillar forming collagen). It is a minor connective tissue component of nearly ubiquitous distribution. Type V collagen binds to DNA, heparan sulfate, thrombospondin, heparin, and insulin. Transcriptionally activated by CEBPZ, which recognizes a CCAAT-like motif, CAAAT in the COL5A1 promoter. The chain is Collagen alpha-1(V) chain (Col5a1) from Mus musculus (Mouse).